The following is an 868-amino-acid chain: MADVSIEKLASDIGTTVDRLVGQFKDAGISKSAGEQVNEDEKQKLLDHLSKQHGSAAEPTRMTLKRKTTSTLSVGKSKEVKVEVRKKRTYVKRSDIEEQQRQAEEEAKRLEEEARLKREAEEKAAAEAKKAAEEKARKAQEAKKAAEEERVRRAEQAKKEAEARKKDEPELTEAEKAEAEAARQEEERLRKAQEEEAQKKLEEDAKKAADEARKLAEENERRWKEEEERRKKAEAEEVHLHSNRYAQEAEDEEDMQVERSSRRRRKSKKNAGEHLKQGFNKPAAPVERVVKLGATITVGELASKLAIKSNEVIKTMMKMGEMATINQVLDQDTAVLVIEEMGHKYELVNDNALEDELLADGTDGEKTSRAPVVTIMGHVDHGKTSLLDYIRRAKVADGEAGGITQHIGAYKVQTDNGEITFLDTPGHAAFTAMRARGATATDIVILVVAADDGVMPQTKEAVQHARAAGVPLIVAVNKMDKETADPDRVKTELSQLEVISEEWGGEHQFCNVSAKTGMGVDELLEAIVLQSELLDLQAVAEGPGRGIVIESRLDKGRGPVASVLVQEGQLRAGDILLCGEEYGRVRAMRDENGKDMKLAGPSTPVEVLGLSGVPVAGEDAAVVKDERKAREVAAKRHQKKRELKLARQQKAKLENMFANMESGDVSELNIVLKADVQGSVEAISESLIKLSTSEVKVNIVGSGVGGITETDATLAAASGAIVLGFNVRADATARRVLEAEEIDLRYYSVIYNLIDEVKAAMSGMLAPEFKQEIIGLAEVRDVFKSPKLGAIAGCMVTEGNVKRSNPIRVLRDNVVIYEGELESLRRFKDDVQDVRNGMECGIGVKNYNDVKVGDQIEVFEIVEVKREI.

2 disordered regions span residues 49-72 (LSKQ…TSTL) and 92-276 (KRSD…EHLK). A compositionally biased stretch (basic and acidic residues) spans 92–240 (KRSDIEEQQR…KKAEAEEVHL (149 aa)). A tr-type G domain is found at 368-537 (SRAPVVTIMG…VLQSELLDLQ (170 aa)). The segment at 377–384 (GHVDHGKT) is G1. 377 to 384 (GHVDHGKT) is a binding site for GTP. The interval 402-406 (GITQH) is G2. The interval 423–426 (DTPG) is G3. Residues 423-427 (DTPGH) and 477-480 (NKMD) each bind GTP. Positions 477–480 (NKMD) are G4. The segment at 513-515 (SAK) is G5.

Belongs to the TRAFAC class translation factor GTPase superfamily. Classic translation factor GTPase family. IF-2 subfamily.

It localises to the cytoplasm. One of the essential components for the initiation of protein synthesis. Protects formylmethionyl-tRNA from spontaneous hydrolysis and promotes its binding to the 30S ribosomal subunits. Also involved in the hydrolysis of GTP during the formation of the 70S ribosomal complex. The chain is Translation initiation factor IF-2 from Alteromonas mediterranea (strain DSM 17117 / CIP 110805 / LMG 28347 / Deep ecotype).